The primary structure comprises 146 residues: Dihydroneopterin aldolase 1 (146 aa).

Residues glutamate 41, tyrosine 73, and 92–93 (LE) contribute to the substrate site. The Proton donor/acceptor role is filled by lysine 119.

The protein belongs to the DHNA family. As to quaternary structure, homooctamer. Forms a hollow cylinder assembled from two ring-shaped tetramers. As to expression, expressed in roots, leaves, stems and siliques.

It carries out the reaction 7,8-dihydroneopterin = 6-hydroxymethyl-7,8-dihydropterin + glycolaldehyde. The protein operates within cofactor biosynthesis; tetrahydrofolate biosynthesis; 2-amino-4-hydroxy-6-hydroxymethyl-7,8-dihydropteridine diphosphate from 7,8-dihydroneopterin triphosphate: step 3/4. Functionally, catalyzes the conversion of 7,8-dihydroneopterin into 6-hydroxymethyl-7,8-dihydropterin, a biosynthetic precursor of the vitamin tetrahydrofolate. Can use L-threo-dihydroneopterin and D-erythro-dihydroneopterin as substrates for the formation of 6-hydroxymethyldihydropterin, but it can also catalyze the epimerization of carbon 2' of dihydroneopterin and dihydromonapterin. In Arabidopsis thaliana (Mouse-ear cress), this protein is Dihydroneopterin aldolase 1.